The following is a 232-amino-acid chain: Orotidine 5'-phosphate decarboxylase (232 aa).

Residues D13, K35, 62–71, T121, R182, Q191, G211, and R212 each bind substrate; that span reads DLKFHDIPNT. Catalysis depends on K64, which acts as the Proton donor.

Belongs to the OMP decarboxylase family. Type 1 subfamily. As to quaternary structure, homodimer.

It carries out the reaction orotidine 5'-phosphate + H(+) = UMP + CO2. The protein operates within pyrimidine metabolism; UMP biosynthesis via de novo pathway; UMP from orotate: step 2/2. Catalyzes the decarboxylation of orotidine 5'-monophosphate (OMP) to uridine 5'-monophosphate (UMP). The sequence is that of Orotidine 5'-phosphate decarboxylase from Teredinibacter turnerae (strain ATCC 39867 / T7901).